Here is a 107-residue protein sequence, read N- to C-terminus: Ferredoxin (107 aa).

The propeptide occupies 1–8 (MVSGVSRN). Positions 45, 51, and 54 each coordinate [2Fe-2S] cluster.

Requires [2Fe-2S] cluster as cofactor.

The protein resides in the hydrogenosome. In terms of biological role, ferredoxins are iron-sulfur proteins that transfer electrons in a wide variety of metabolic reactions. The chain is Ferredoxin from Psalteriomonas lanterna (Amoeboflagellate).